A 303-amino-acid polypeptide reads, in one-letter code: MNPLCSELKSGRNAPPAAIGQVLIEALPYIRKFEGKTFVIKYGGSAMKDDKLKNSFAQNVTLLRKVGINVVLVHGGGDAITRTAEKMGLSSRFHHGKRVTDIEMISVVQMTLAGKVNQDIVRLISEHGGKAVGVTGLDADTIKAIPCQNADKLGLVGDVESINTLYIDLLCRAGLIPVIAPIGYDEDGSIYNINADDAASSIAIALKAEKLIYVSDVEGIHVGERILKTICKAEAADFIEQGIISGGMIPKVLSAFKTLDGGVGKIHLIDGKFTHSLLLEIFTHEGVGTQFIAEQDNDNPGKR.

Substrate contacts are provided by residues 76-77 (GG), Arg98, and Asn192.

Belongs to the acetylglutamate kinase family. ArgB subfamily.

It is found in the cytoplasm. It catalyses the reaction N-acetyl-L-glutamate + ATP = N-acetyl-L-glutamyl 5-phosphate + ADP. It participates in amino-acid biosynthesis; L-arginine biosynthesis; N(2)-acetyl-L-ornithine from L-glutamate: step 2/4. Its function is as follows. Catalyzes the ATP-dependent phosphorylation of N-acetyl-L-glutamate. The chain is Acetylglutamate kinase from Chlorobium phaeobacteroides (strain DSM 266 / SMG 266 / 2430).